Here is a 199-residue protein sequence, read N- to C-terminus: MEGEGVQPPDENLENGSRPRFKWKKVLRLVVSGIKAAGLLLCVVYVCLQFSSSPAKDSPIQRLRAPVTGCEGGRLFIGTSKNEYETMEVQNNSVIINCDGLYLIHLKGSFFQEVKINLHFRKDRSPIFVPMLNNGQRVVFTVVTSLAFKDEVYLTVNASDTLCEHLQINDGELIIVQLTPNGYCAPERPYSSTVNQVPL.

The Cytoplasmic segment spans residues 1-25 (MEGEGVQPPDENLENGSRPRFKWKK). Residues 26–48 (VLRLVVSGIKAAGLLLCVVYVCL) traverse the membrane as a helical; Signal-anchor for type II membrane protein segment. At 49–199 (QFSSSPAKDS…YSSTVNQVPL (151 aa)) the chain is on the extracellular side. Positions 59 to 176 (PIQRLRAPVT…QINDGELIIV (118 aa)) constitute a THD domain. 2 cysteine pairs are disulfide-bonded: C70–C163 and C98–C184. 2 N-linked (GlcNAc...) asparagine glycosylation sites follow: N91 and N157.

This sequence belongs to the tumor necrosis factor family. Homotrimer. In terms of tissue distribution, detected in T-cell lines, but not in a macrophage cell line.

It localises to the membrane. Cytokine that binds to TNFRSF4. Co-stimulates T-cell proliferation and cytokine production. This chain is Tumor necrosis factor ligand superfamily member 4 (Tnfsf4), found in Rattus norvegicus (Rat).